The primary structure comprises 176 residues: NAD(P)H-quinone oxidoreductase subunit 6, chloroplastic (176 aa).

The next 5 helical transmembrane spans lie at 10–30, 32–52, 61–81, 92–112, and 152–172; these read FLLV…VLLP, PIYS…FYIL, AQLL…VMFM, LWTV…ISLI, and FFLP…GAIA.

This sequence belongs to the complex I subunit 6 family. As to quaternary structure, NDH is composed of at least 16 different subunits, 5 of which are encoded in the nucleus.

Its subcellular location is the plastid. It is found in the chloroplast thylakoid membrane. The catalysed reaction is a plastoquinone + NADH + (n+1) H(+)(in) = a plastoquinol + NAD(+) + n H(+)(out). It catalyses the reaction a plastoquinone + NADPH + (n+1) H(+)(in) = a plastoquinol + NADP(+) + n H(+)(out). Functionally, NDH shuttles electrons from NAD(P)H:plastoquinone, via FMN and iron-sulfur (Fe-S) centers, to quinones in the photosynthetic chain and possibly in a chloroplast respiratory chain. The immediate electron acceptor for the enzyme in this species is believed to be plastoquinone. Couples the redox reaction to proton translocation, and thus conserves the redox energy in a proton gradient. This Solanum tuberosum (Potato) protein is NAD(P)H-quinone oxidoreductase subunit 6, chloroplastic (ndhG).